The chain runs to 464 residues: Keratin, type I cytoskeletal 28 (464 aa).

The interval 1 to 85 (MSLQFSNGSR…GSEGGLLSGN (85 aa)) is head. A coil 1A region spans residues 86–121 (EKVTMQNLNDRLASYLDNVRALEEANAELERKIKGW). The IF rod domain maps to 86–401 (EKVTMQNLND…RLIDGDGNSC (316 aa)). Positions 122 to 143 (YEKYGPGSCRGLDHDYSRYHLT) are linker 1. The tract at residues 144-235 (IEDLKNKIIS…KNHEEEMKAL (92 aa)) is coil 1B. The interval 236–258 (QCAAGGNVNVEMNAAPGVDLAVL) is linker 12. A coil 2 region spans residues 259–397 (LNNMRAEYEA…ETYCRLIDGD (139 aa)). The interval 398–464 (GNSCSKSKGF…NGKTEQRVPF (67 aa)) is tail. Residues 443 to 464 (IHSIEEKTSKMTNGKTEQRVPF) form a disordered region.

Belongs to the intermediate filament family. Heterotetramer of two type I and two type II keratins. As to expression, strongly expressed in skin and scalp, and weak expression observed in thymus. In the hair follicle, expressed in Henle layer, Huxley layer and in the irs cuticle. Expression extends from the bulb region up to the point of differentiation into the three layers. Also present in the medulla of beard hair (at protein level).

The protein resides in the cytoplasm. Essential for the proper assembly of types I and II keratin protein complexes and the formation of keratin intermediate filaments in the inner root sheath (irs). This Homo sapiens (Human) protein is Keratin, type I cytoskeletal 28.